The sequence spans 265 residues: Apolipoprotein A-I (265 aa).

The signal sequence occupies residues 1 to 18; sequence MKAVVLTLAVLFLTGSQA. 2 repeat units span residues 67–88 and 89–110. The tract at residues 67 to 265 is 10 X approximate tandem repeats; that stretch reads LKLLDNWDSL…DEASKKLNAQ (199 aa). A Methionine sulfoxide modification is found at Met-109. The 3; half-length repeat unit spans residues 111–121; sequence KDLQEVKQKVQ. A run of 5 repeats spans residues 122–142, 144–165, 166–187, 188–209, and 210–230. The stretch at 231–241 is one 9; half-length repeat; that stretch reads PALEDLRQGLL. Repeat 10 spans residues 242–265; sequence PVLENLKVSILAAIDEASKKLNAQ.

The protein belongs to the apolipoprotein A1/A4/E family. In terms of assembly, homodimer. Interacts with APOA1BP and CLU. Component of a sperm activating protein complex (SPAP), consisting of APOA1, an immunoglobulin heavy chain, an immunoglobulin light chain and albumin. Interacts with NDRG1. Interacts with SCGB3A2. Interacts with NAXE and YJEFN3. Glycosylated. In terms of processing, palmitoylated. Post-translationally, phosphorylation sites are present in the extracellular medium. Major protein of plasma HDL, also found in chylomicrons.

The protein localises to the secreted. Participates in the reverse transport of cholesterol from tissues to the liver for excretion by promoting cholesterol efflux from tissues and by acting as a cofactor for the lecithin cholesterol acyltransferase (LCAT). As part of the SPAP complex, activates spermatozoa motility. This chain is Apolipoprotein A-I (APOA1), found in Balaenoptera acutorostrata scammoni (North Pacific minke whale).